The chain runs to 498 residues: ATP synthase subunit beta, chloroplastic (498 aa).

172-179 (GGAGVGKT) provides a ligand contact to ATP.

Belongs to the ATPase alpha/beta chains family. As to quaternary structure, F-type ATPases have 2 components, CF(1) - the catalytic core - and CF(0) - the membrane proton channel. CF(1) has five subunits: alpha(3), beta(3), gamma(1), delta(1), epsilon(1). CF(0) has four main subunits: a(1), b(1), b'(1) and c(9-12).

The protein resides in the plastid. The protein localises to the chloroplast thylakoid membrane. The enzyme catalyses ATP + H2O + 4 H(+)(in) = ADP + phosphate + 5 H(+)(out). Its function is as follows. Produces ATP from ADP in the presence of a proton gradient across the membrane. The catalytic sites are hosted primarily by the beta subunits. The polypeptide is ATP synthase subunit beta, chloroplastic (Trochodendron aralioides (Wheel tree)).